The chain runs to 227 residues: tRNA (guanine-N(1)-)-methyltransferase (227 aa).

Residues Gly112 and 132-137 each bind S-adenosyl-L-methionine; that span reads LGDFVL.

This sequence belongs to the RNA methyltransferase TrmD family. In terms of assembly, homodimer.

It localises to the cytoplasm. The catalysed reaction is guanosine(37) in tRNA + S-adenosyl-L-methionine = N(1)-methylguanosine(37) in tRNA + S-adenosyl-L-homocysteine + H(+). Its function is as follows. Specifically methylates guanosine-37 in various tRNAs. The protein is tRNA (guanine-N(1)-)-methyltransferase of Gloeobacter violaceus (strain ATCC 29082 / PCC 7421).